Reading from the N-terminus, the 48-residue chain is uncharacterized protein (48 aa).

This is an uncharacterized protein from Treponema pallidum (strain Nichols).